We begin with the raw amino-acid sequence, 429 residues long: Protein FAM98B (429 aa).

The interval 304–429 (RVPDRGGRPN…GGGGGGYRRY (126 aa)) is disordered. The segment covering 305–314 (VPDRGGRPNE) has biased composition (basic and acidic residues). The segment covering 332 to 429 (GGRGGWGGGG…GGGGGGYRRY (98 aa)) has biased composition (gly residues).

The protein belongs to the FAM98 family. As to quaternary structure, homodimer. Component of a tRNA-splicing ligase complex. Interacts with FAM98A.

The protein resides in the nucleus. Its subcellular location is the cytoplasm. Positively stimulates PRMT1-induced protein arginine dimethylated arginine methylation. In Mus musculus (Mouse), this protein is Protein FAM98B (Fam98b).